A 321-amino-acid polypeptide reads, in one-letter code: Glucokinase (321 aa).

8–13 (GDVGGT) lines the ATP pocket.

The protein belongs to the bacterial glucokinase family.

The protein localises to the cytoplasm. It catalyses the reaction D-glucose + ATP = D-glucose 6-phosphate + ADP + H(+). The sequence is that of Glucokinase from Enterobacter sp. (strain 638).